The chain runs to 447 residues: MANVVVVGAQWGDEGKGKITDLLSKSADVVVRYQGGVNAGHTIVVKDQTLKLHLIPSGILYPDTQCIIGAGTVVDPKVLLEELEQLEQLGVSTENLLIAETAHVTMPYHRQLDIAAEERRGSRRIGTTGRGIGPTYADKSERTGIRMLDLLDRDQLAAKLEWAIAQKNLILEKLYGLAPLEPQPIIEEYSAYGERLRSHIVDGSLVLDDAIRRRRNILFEGAQGTLLDLDHGTYPYVTSSNPVAGGACVGAGIGPTMIDRVIGVAKAYTTRVGEGPFPTELLDEVGELLGDRGAEFGTTTGRRRRCGWFDAVIGRYAVRINGLDCLAITKLDVLDELPEIKVCVAYDIDGERCEHFPSNALKFARCRPIYETLPGWQQSTRHCRSLDDLPKAALNYLKFLAEIMSVPIAIVSLGAERSQTIIVEDPIHGPKRALLKDDGTQVHPILS.

GTP-binding positions include 12-18 (GDEGKGK) and 40-42 (GHT). Asp-13 serves as the catalytic Proton acceptor. Asp-13 and Gly-40 together coordinate Mg(2+). IMP is bound by residues 13-16 (DEGK), 38-41 (NAGH), Thr-128, Arg-142, Gln-223, Thr-238, and Arg-302. His-41 serves as the catalytic Proton donor. Residue 298 to 304 (TTTGRRR) participates in substrate binding. GTP contacts are provided by residues Arg-304, 330 to 332 (KLD), and 412 to 414 (SLG).

The protein belongs to the adenylosuccinate synthetase family. Homodimer. Mg(2+) serves as cofactor.

Its subcellular location is the cytoplasm. The catalysed reaction is IMP + L-aspartate + GTP = N(6)-(1,2-dicarboxyethyl)-AMP + GDP + phosphate + 2 H(+). It functions in the pathway purine metabolism; AMP biosynthesis via de novo pathway; AMP from IMP: step 1/2. In terms of biological role, plays an important role in the de novo pathway of purine nucleotide biosynthesis. Catalyzes the first committed step in the biosynthesis of AMP from IMP. The chain is Adenylosuccinate synthetase from Thermosynechococcus vestitus (strain NIES-2133 / IAM M-273 / BP-1).